A 226-amino-acid chain; its full sequence is Thiamine-phosphate synthase (226 aa).

4-amino-2-methyl-5-(diphosphooxymethyl)pyrimidine-binding positions include 46–50 and Asn87; that span reads QLRDK. Positions 88 and 107 each coordinate Mg(2+). Residue Ser126 participates in 4-amino-2-methyl-5-(diphosphooxymethyl)pyrimidine binding. 152–154 contacts 2-[(2R,5Z)-2-carboxy-4-methylthiazol-5(2H)-ylidene]ethyl phosphate; that stretch reads TPT. Residue Lys155 coordinates 4-amino-2-methyl-5-(diphosphooxymethyl)pyrimidine. 2-[(2R,5Z)-2-carboxy-4-methylthiazol-5(2H)-ylidene]ethyl phosphate is bound at residue Gly183.

Belongs to the thiamine-phosphate synthase family. It depends on Mg(2+) as a cofactor.

It catalyses the reaction 2-[(2R,5Z)-2-carboxy-4-methylthiazol-5(2H)-ylidene]ethyl phosphate + 4-amino-2-methyl-5-(diphosphooxymethyl)pyrimidine + 2 H(+) = thiamine phosphate + CO2 + diphosphate. It carries out the reaction 2-(2-carboxy-4-methylthiazol-5-yl)ethyl phosphate + 4-amino-2-methyl-5-(diphosphooxymethyl)pyrimidine + 2 H(+) = thiamine phosphate + CO2 + diphosphate. The enzyme catalyses 4-methyl-5-(2-phosphooxyethyl)-thiazole + 4-amino-2-methyl-5-(diphosphooxymethyl)pyrimidine + H(+) = thiamine phosphate + diphosphate. The protein operates within cofactor biosynthesis; thiamine diphosphate biosynthesis; thiamine phosphate from 4-amino-2-methyl-5-diphosphomethylpyrimidine and 4-methyl-5-(2-phosphoethyl)-thiazole: step 1/1. Its function is as follows. Condenses 4-methyl-5-(beta-hydroxyethyl)thiazole monophosphate (THZ-P) and 2-methyl-4-amino-5-hydroxymethyl pyrimidine pyrophosphate (HMP-PP) to form thiamine monophosphate (TMP). The chain is Thiamine-phosphate synthase from Mycobacterium sp. (strain JLS).